A 594-amino-acid chain; its full sequence is ATP-dependent RNA helicase DBP9 (594 aa).

The short motif at 17-45 (TTFEAFHLDSRLLQAIKNIGFQYPTLIQS) is the Q motif element. The region spanning 49–233 (PLALQQKRDI…QKFCRSPAIL (185 aa)) is the Helicase ATP-binding domain. 62–69 (AATGSGKT) lines the ATP pocket. Residues 179–182 (DEVD) carry the DEAD box motif. One can recognise a Helicase C-terminal domain in the interval 246–476 (KLLQYYVKVS…PYKFDQKQVE (231 aa)). 2 disordered regions span residues 339–377 (EDDE…QVKK) and 558–594 (TKVK…KNFK). Residues 345–366 (EGHNTENQEEKSLEGEPENDKK) are compositionally biased toward basic and acidic residues. The segment covering 567 to 584 (NAKKRHSHKKGRVSKPKN) has biased composition (basic residues). Positions 585–594 (GKVDPLKNFK) are enriched in basic and acidic residues.

The protein belongs to the DEAD box helicase family. DDX56/DBP9 subfamily. In terms of assembly, interacts with DBP6.

The protein resides in the nucleus. Its subcellular location is the nucleolus. The catalysed reaction is ATP + H2O = ADP + phosphate + H(+). Its function is as follows. ATP-binding RNA helicase involved in the biogenesis of 60S ribosomal subunits and is required for the normal formation of 25S and 5.8S rRNAs. The sequence is that of ATP-dependent RNA helicase DBP9 (DBP9) from Saccharomyces cerevisiae (strain YJM789) (Baker's yeast).